A 338-amino-acid polypeptide reads, in one-letter code: Fructose-1,6-bisphosphatase class 1 (338 aa).

Mg(2+) contacts are provided by Glu90, Asp112, Leu114, and Asp115. Substrate contacts are provided by residues 115–118 (DGSS), Asn207, and Lys273. Glu279 lines the Mg(2+) pocket.

Belongs to the FBPase class 1 family. As to quaternary structure, homotetramer. Mg(2+) serves as cofactor.

It localises to the cytoplasm. It catalyses the reaction beta-D-fructose 1,6-bisphosphate + H2O = beta-D-fructose 6-phosphate + phosphate. It participates in carbohydrate biosynthesis; gluconeogenesis. The protein is Fructose-1,6-bisphosphatase class 1 of Stenotrophomonas maltophilia (strain R551-3).